The following is a 599-amino-acid chain: DNA mismatch repair protein MutL (599 aa).

This sequence belongs to the DNA mismatch repair MutL/HexB family.

This protein is involved in the repair of mismatches in DNA. It is required for dam-dependent methyl-directed DNA mismatch repair. May act as a 'molecular matchmaker', a protein that promotes the formation of a stable complex between two or more DNA-binding proteins in an ATP-dependent manner without itself being part of a final effector complex. This is DNA mismatch repair protein MutL from Rhodopseudomonas palustris (strain BisB18).